The sequence spans 885 residues: DNA mismatch repair protein MutS (885 aa).

626–633 (GPNMGGKS) contributes to the ATP binding site.

The protein belongs to the DNA mismatch repair MutS family.

Its function is as follows. This protein is involved in the repair of mismatches in DNA. It is possible that it carries out the mismatch recognition step. This protein has a weak ATPase activity. The sequence is that of DNA mismatch repair protein MutS from Burkholderia orbicola (strain MC0-3).